Here is a 527-residue protein sequence, read N- to C-terminus: MSSDIPCCGTTFSLYVVIIIALVAFAGLMAGLTLGLMSLGLVDLEVLIKSGRPQDRINAGKIFPVVKNQHLLLCTLLIGNSMAMEALPIFLDKIVPPWLAILLSVTLILVFGEIMPQAVCTRYGLKVGAIMAPFVRVLLVLFFPISYPISKVLDWMLGKGHGVLLRRAELKTFVNFHGNEAGKGGDLTTDETSIITGALELTEKTAKDAMTPISNAFSLELDTPLNLETLNTIMSVGHSRVPVYFRNPTHIIGLILVKNLLAVDARKEVPLRKMSMRKIPRVSETMPLYDILNEFQKGHSHIAVVYKDLDEQEQSPETSENGIERRKNKKTKDELFKDSCRKPKAQFEVSEKEVFKIETGDAKSGKSENGEEQQGSGKTSLLAAPAKKRHRGCSFCILDIENTPIPDFPTNEEVVGVITMEDVIEELLQEEILDETDEYVNIHNRIRVNMHASPENLPSVITSITQSSSGSTSPNQTSHMATPDSSPTTKPSNSSPTRKPSVSSPTREPSDSSHSMAPKHEESTQTL.

Over 1 to 15 the chain is Extracellular; sequence MSSDIPCCGTTFSLY. The 184-residue stretch at 8 to 191 folds into the CNNM transmembrane domain; it reads CGTTFSLYVV…GKGGDLTTDE (184 aa). The helical transmembrane segment at 16–36 threads the bilayer; it reads VVIIIALVAFAGLMAGLTLGL. The Cytoplasmic segment spans residues 37-70; the sequence is MSLGLVDLEVLIKSGRPQDRINAGKIFPVVKNQH. The helical transmembrane segment at 71-91 threads the bilayer; the sequence is LLLCTLLIGNSMAMEALPIFL. The Extracellular portion of the chain corresponds to 92-93; sequence DK. Residues 94 to 114 traverse the membrane as a helical segment; sequence IVPPWLAILLSVTLILVFGEI. Residues 115–126 are Cytoplasmic-facing; the sequence is MPQAVCTRYGLK. The helical transmembrane segment at 127-147 threads the bilayer; it reads VGAIMAPFVRVLLVLFFPISY. Residues 148–527 lie on the Extracellular side of the membrane; it reads PISKVLDWML…PKHEESTQTL (380 aa). 3 consecutive CBS domains span residues 210–271, 274–334, and 366–435; these read MTPI…EVPL, MSMR…TKDE, and KSEN…ILDE. 3 disordered regions span residues 307-335, 358-384, and 464-527; these read KDLD…KDEL, ETGD…LLAA, and ITQS…TQTL. S315 carries the post-translational modification Phosphoserine. The span at 358–369 shows a compositional bias: basic and acidic residues; that stretch reads ETGDAKSGKSEN. Low complexity predominate over residues 464–501; it reads ITQSSSGSTSPNQTSHMATPDSSPTTKPSNSSPTRKPS. N-linked (GlcNAc...) asparagine glycosylation is present at N475. Polar residues predominate over residues 502 to 515; it reads VSSPTREPSDSSHS. Positions 518-527 are enriched in basic and acidic residues; it reads PKHEESTQTL.

It localises to the membrane. In Arabidopsis thaliana (Mouse-ear cress), this protein is DUF21 domain-containing protein At1g47330 (CBSDUF7).